The chain runs to 70 residues: Melittin (70 aa).

The signal sequence occupies residues 1-21 (MKFLVNVALVFMVVYISYIYA). A propeptide spans 22–43 (APEPEPAPEPEAEADAEADPEA) (removed by a dipeptidylpeptidase). Position 44 is an N-formylglycine; partial (G44). The residue at position 69 (Q69) is a Glutamine amide.

The protein belongs to the melittin family. As to quaternary structure, monomer (in solution and for integration into membranes), homotetramer (in solution and potentially as a toroidal pore in membranes), and potenially homomultimer (as a toroidal pore in membranes). Expressed by the venom gland.

The protein resides in the secreted. Its subcellular location is the target cell membrane. Melittin: Main toxin of bee venom with strong antimicrobial activity and hemolytic activity. It has enhancing effects on bee venom phospholipase A2 activity. This amphipathic toxin binds to negatively charged membrane surface and forms pore by inserting into lipid bilayers inducing the leakage of ions and molecules and the enhancement of permeability that ultimately leads to cell lysis. It acts as a voltage-gated pore with higher selectivity for anions over cations. The ion conductance has been shown to be voltage-dependent. Self-association of melittin in membranes is promoted by high ionic strength, but not by the presence of negatively charged lipids. In vivo, intradermal injection into healthy human volunteers produce sharp pain sensation and an inflammatory response. It produces pain by activating primary nociceptor cells directly and indirectly due to its ability to activate plasma membrane phospholipase A2 and its pore-forming activity. In the context of inflammation and cancer tests, is highly cytotoxic to normal cells, highly induces calcium signaling and almost completely prevents cAMP production. In addition, prevents LPS-induced nitric oxid (NO) synthesis but does not affect the IP3 signaling and pro-inflammatory activation of endothelial cells. Also shows significant antiproliferative activity on the breast cancer cell line MDA-MB-231. In terms of biological role, melittin-S: 1.4-fold less hemolytic and adopts a less organized secondary structure than melittin. Its function is as follows. Melittin-2: Has strong hemolytic activity. In Apis mellifera (Honeybee), this protein is Melittin (MELT).